The sequence spans 209 residues: Potassium-transporting ATPase KdpC subunit (209 aa).

A helical membrane pass occupies residues 18–38 (ALALFVLLGLGLGYSLVATGI).

Belongs to the KdpC family. As to quaternary structure, the system is composed of three essential subunits: KdpA, KdpB and KdpC.

The protein resides in the cell inner membrane. In terms of biological role, part of the high-affinity ATP-driven potassium transport (or Kdp) system, which catalyzes the hydrolysis of ATP coupled with the electrogenic transport of potassium into the cytoplasm. This subunit acts as a catalytic chaperone that increases the ATP-binding affinity of the ATP-hydrolyzing subunit KdpB by the formation of a transient KdpB/KdpC/ATP ternary complex. The chain is Potassium-transporting ATPase KdpC subunit from Xanthomonas campestris pv. campestris (strain 8004).